The sequence spans 647 residues: 1-deoxy-D-xylulose-5-phosphate synthase (647 aa).

Thiamine diphosphate contacts are provided by residues histidine 79 and 120–122; that span reads GHA. Aspartate 152 contributes to the Mg(2+) binding site. Thiamine diphosphate is bound by residues 153 to 154, asparagine 181, phenylalanine 293, and glutamate 377; that span reads GS. Asparagine 181 lines the Mg(2+) pocket.

Belongs to the transketolase family. DXPS subfamily. Homodimer. Mg(2+) is required as a cofactor. Thiamine diphosphate serves as cofactor.

The catalysed reaction is D-glyceraldehyde 3-phosphate + pyruvate + H(+) = 1-deoxy-D-xylulose 5-phosphate + CO2. Its pathway is metabolic intermediate biosynthesis; 1-deoxy-D-xylulose 5-phosphate biosynthesis; 1-deoxy-D-xylulose 5-phosphate from D-glyceraldehyde 3-phosphate and pyruvate: step 1/1. Catalyzes the acyloin condensation reaction between C atoms 2 and 3 of pyruvate and glyceraldehyde 3-phosphate to yield 1-deoxy-D-xylulose-5-phosphate (DXP). The sequence is that of 1-deoxy-D-xylulose-5-phosphate synthase from Bacteroides thetaiotaomicron (strain ATCC 29148 / DSM 2079 / JCM 5827 / CCUG 10774 / NCTC 10582 / VPI-5482 / E50).